The sequence spans 397 residues: Acetate kinase 1 (397 aa).

Residue Asn-8 coordinates Mg(2+). An ATP-binding site is contributed by Lys-15. Arg-89 contacts substrate. The Proton donor/acceptor role is filled by Asp-146. ATP-binding positions include 206-210, 281-283, and 329-333; these read HLGNG, DLR, and GIGEN. A Mg(2+)-binding site is contributed by Glu-382.

Belongs to the acetokinase family. Homodimer. The cofactor is Mg(2+). Requires Mn(2+) as cofactor.

Its subcellular location is the cytoplasm. The catalysed reaction is acetate + ATP = acetyl phosphate + ADP. It participates in metabolic intermediate biosynthesis; acetyl-CoA biosynthesis; acetyl-CoA from acetate: step 1/2. Catalyzes the formation of acetyl phosphate from acetate and ATP. Can also catalyze the reverse reaction. The protein is Acetate kinase 1 of Listeria monocytogenes serovar 1/2a (strain ATCC BAA-679 / EGD-e).